The chain runs to 89 residues: Small ribosomal subunit protein uS15 (89 aa).

Belongs to the universal ribosomal protein uS15 family. In terms of assembly, part of the 30S ribosomal subunit. Forms a bridge to the 50S subunit in the 70S ribosome, contacting the 23S rRNA.

Functionally, one of the primary rRNA binding proteins, it binds directly to 16S rRNA where it helps nucleate assembly of the platform of the 30S subunit by binding and bridging several RNA helices of the 16S rRNA. Its function is as follows. Forms an intersubunit bridge (bridge B4) with the 23S rRNA of the 50S subunit in the ribosome. The polypeptide is Small ribosomal subunit protein uS15 (Polynucleobacter asymbioticus (strain DSM 18221 / CIP 109841 / QLW-P1DMWA-1) (Polynucleobacter necessarius subsp. asymbioticus)).